Consider the following 183-residue polypeptide: Inner membrane protein p54 (183 aa).

A helical membrane pass occupies residues 32–52 (YTILIAIVVLVIIIIVLIYLF). A disordered region spans residues 81–157 (EVTPQPGTSK…PYTTVTTQNT (77 aa)). Positions 111–122 (RPATNKPVTDNP) are enriched in polar residues. A compositionally biased stretch (low complexity) spans 130–143 (ATGGPAAAPAAASA). Residues 149-161 (YTTVTTQNTASQT) form an interaction with host DYNLL1 region.

The protein belongs to the asfivirus envelope protein p54 family. As to quaternary structure, interacts with the host light chain cytoplasmic dynein DYNLL1; this interaction is critical for intracellular microtubule-dependent virus transport toward viral factories.

It localises to the virion membrane. Its subcellular location is the host cytoplasm. The protein resides in the host cytoskeleton. The protein localises to the host endoplasmic reticulum membrane. Functionally, inner envelope protein involved, through its interaction with host dynein, in the intracellular microtubule-dependent transport of viral capsid toward viral factories. Seems to induce caspase-3 activation and apoptosis. Plays a role in virion morphogenesis by recruiting and transforming the host ER membranes into the precursors of the viral envelope. Involved in virus attachment to the host cell. The polypeptide is Inner membrane protein p54 (African swine fever virus (strain Badajoz 1971 Vero-adapted) (Ba71V)).